The sequence spans 382 residues: Lipid-A-disaccharide synthase (382 aa).

The protein belongs to the LpxB family.

It carries out the reaction 2-N,3-O-bis[(3R)-3-hydroxytetradecanoyl]-alpha-D-glucosaminyl 1-phosphate + UDP-2-N,3-O-bis[(3R)-3-hydroxytetradecanoyl]-alpha-D-glucosamine = lipid A disaccharide (E. coli) + UDP + H(+). It catalyses the reaction a lipid X + a UDP-2-N,3-O-bis[(3R)-3-hydroxyacyl]-alpha-D-glucosamine = a lipid A disaccharide + UDP + H(+). The protein operates within glycolipid biosynthesis; lipid IV(A) biosynthesis; lipid IV(A) from (3R)-3-hydroxytetradecanoyl-[acyl-carrier-protein] and UDP-N-acetyl-alpha-D-glucosamine: step 5/6. Condensation of UDP-2,3-diacylglucosamine and 2,3-diacylglucosamine-1-phosphate to form lipid A disaccharide, a precursor of lipid A, a phosphorylated glycolipid that anchors the lipopolysaccharide to the outer membrane of the cell. The chain is Lipid-A-disaccharide synthase from Shigella flexneri serotype 5b (strain 8401).